Reading from the N-terminus, the 67-residue chain is Conotoxin Cal6.35 (67 aa).

Residues 1–22 (MKLTCVLIVAVLILTACQVIAA) form the signal peptide. Cystine bridges form between C43-C53, C46-C59, and C52-C66.

It belongs to the conotoxin O1 superfamily. As to expression, expressed by the venom duct.

It is found in the secreted. Probable neurotoxin. The sequence is that of Conotoxin Cal6.35 from Californiconus californicus (California cone).